The chain runs to 190 residues: MTSEVALFGKWSYSGVTCPDISLQDYICVKKNVFTPHSAGRYNKVRFRKAQCPIVERLANSMMMFGRNAGKKVMAVRIIEQAFEIIYLLTDKNPLQVLVEAVMNSGPREDSTRIGSAGTVRRQAVDVSPMRRVNHAVYLLTQGTRAAAFRNIRTVAECLADELINASKGSPNSYSIKQKDALERTAKSHR.

At Thr2 the chain carries N-acetylthreonine.

This sequence belongs to the universal ribosomal protein uS7 family. Component of the small ribosomal subunit. Part of the small subunit (SSU) processome, composed of more than 70 proteins and the RNA chaperone small nucleolar RNA (snoRNA) U3.

The protein resides in the cytoplasm. Its subcellular location is the nucleus. The protein localises to the nucleolus. Component of the small ribosomal subunit. The ribosome is a large ribonucleoprotein complex responsible for the synthesis of proteins in the cell. Part of the small subunit (SSU) processome, first precursor of the small eukaryotic ribosomal subunit. During the assembly of the SSU processome in the nucleolus, many ribosome biogenesis factors, an RNA chaperone and ribosomal proteins associate with the nascent pre-rRNA and work in concert to generate RNA folding, modifications, rearrangements and cleavage as well as targeted degradation of pre-ribosomal RNA by the RNA exosome. The sequence is that of Small ribosomal subunit protein uS7 (rps5) from Dictyostelium discoideum (Social amoeba).